The primary structure comprises 353 residues: Photosystem II D2 protein (353 aa).

N-acetylthreonine is present on Thr2. Thr2 is modified (phosphothreonine). The chain crosses the membrane as a helical span at residues Cys41–Thr61. A chlorophyll a-binding site is contributed by His118. The chain crosses the membrane as a helical span at residues Gly125–Pro141. 2 residues coordinate pheophytin a: Gln130 and Asn143. The chain crosses the membrane as a helical span at residues Val153–Ser166. His198 contacts chlorophyll a. The helical transmembrane segment at Ala208–Asp228 threads the bilayer. 2 residues coordinate a plastoquinone: His215 and Phe262. His215 lines the Fe cation pocket. His269 serves as a coordination point for Fe cation. Residues Gly279 to Arg295 traverse the membrane as a helical segment.

The protein belongs to the reaction center PufL/M/PsbA/D family. PSII is composed of 1 copy each of membrane proteins PsbA, PsbB, PsbC, PsbD, PsbE, PsbF, PsbH, PsbI, PsbJ, PsbK, PsbL, PsbM, PsbT, PsbX, PsbY, PsbZ, Psb30/Ycf12, at least 3 peripheral proteins of the oxygen-evolving complex and a large number of cofactors. It forms dimeric complexes. The D1/D2 heterodimer binds P680, chlorophylls that are the primary electron donor of PSII, and subsequent electron acceptors. It shares a non-heme iron and each subunit binds pheophytin, quinone, additional chlorophylls, carotenoids and lipids. There is also a Cl(-1) ion associated with D1 and D2, which is required for oxygen evolution. The PSII complex binds additional chlorophylls, carotenoids and specific lipids. is required as a cofactor.

The protein resides in the plastid. Its subcellular location is the chloroplast thylakoid membrane. It carries out the reaction 2 a plastoquinone + 4 hnu + 2 H2O = 2 a plastoquinol + O2. Functionally, photosystem II (PSII) is a light-driven water:plastoquinone oxidoreductase that uses light energy to abstract electrons from H(2)O, generating O(2) and a proton gradient subsequently used for ATP formation. It consists of a core antenna complex that captures photons, and an electron transfer chain that converts photonic excitation into a charge separation. The D1/D2 (PsbA/PsbD) reaction center heterodimer binds P680, the primary electron donor of PSII as well as several subsequent electron acceptors. D2 is needed for assembly of a stable PSII complex. The protein is Photosystem II D2 protein of Agrostis stolonifera (Creeping bentgrass).